The chain runs to 247 residues: 14-3-3-like protein B (247 aa).

The protein belongs to the 14-3-3 family.

In Glycine max (Soybean), this protein is 14-3-3-like protein B (GF14B).